The following is a 309-amino-acid chain: Porphobilinogen deaminase (309 aa).

C241 carries the S-(dipyrrolylmethanemethyl)cysteine modification.

This sequence belongs to the HMBS family. In terms of assembly, monomer. Requires dipyrromethane as cofactor.

The catalysed reaction is 4 porphobilinogen + H2O = hydroxymethylbilane + 4 NH4(+). Its pathway is porphyrin-containing compound metabolism; protoporphyrin-IX biosynthesis; coproporphyrinogen-III from 5-aminolevulinate: step 2/4. In terms of biological role, tetrapolymerization of the monopyrrole PBG into the hydroxymethylbilane pre-uroporphyrinogen in several discrete steps. The protein is Porphobilinogen deaminase of Campylobacter concisus (strain 13826).